Consider the following 366-residue polypeptide: Ribosomal RNA large subunit methyltransferase M (366 aa).

S-adenosyl-L-methionine-binding positions include Ser188, 221–224 (CPGG), Asp240, Asp260, and Asp277. The active-site Proton acceptor is the Lys306.

It belongs to the class I-like SAM-binding methyltransferase superfamily. RNA methyltransferase RlmE family. RlmM subfamily. In terms of assembly, monomer.

The protein resides in the cytoplasm. It carries out the reaction cytidine(2498) in 23S rRNA + S-adenosyl-L-methionine = 2'-O-methylcytidine(2498) in 23S rRNA + S-adenosyl-L-homocysteine + H(+). In terms of biological role, catalyzes the 2'-O-methylation at nucleotide C2498 in 23S rRNA. The polypeptide is Ribosomal RNA large subunit methyltransferase M (Shigella flexneri serotype 5b (strain 8401)).